Reading from the N-terminus, the 433-residue chain is Mitochondrial inner membrane magnesium transporter MIT1 (433 aa).

Residues Thr-257–Met-298 are a coiled coil. Residues Phe-360–Val-380 form a helical membrane-spanning segment. Residues Thr-381–Asn-396 are Extracellular-facing. Residues Tyr-397–Thr-417 form a helical membrane-spanning segment. The Mitochondrial matrix segment spans residues Lys-418–Arg-433.

This sequence belongs to the CorA metal ion transporter (MIT) (TC 1.A.35) family.

The protein resides in the mitochondrion inner membrane. Mitochondrial inner membrane magnesium transporter required for mitochondrial magnesium homeostasis. Involved in the development of the sporozoite in the mosquito vector midgut. The polypeptide is Mitochondrial inner membrane magnesium transporter MIT1 (Plasmodium berghei (strain Anka)).